The chain runs to 725 residues: Dipeptidyl-peptidase 5 (725 aa).

Residues 1–18 (MGALRWLSIAATASTALA) form the signal peptide. N-linked (GlcNAc...) asparagine glycans are attached at residues asparagine 75, asparagine 96, asparagine 153, asparagine 258, asparagine 383, and asparagine 453. The active-site Charge relay system is serine 563. Asparagine 610 is a glycosylation site (N-linked (GlcNAc...) asparagine). Active-site charge relay system residues include aspartate 646 and histidine 678.

Belongs to the peptidase S9C family.

Its subcellular location is the secreted. In Aspergillus oryzae (strain ATCC 42149 / RIB 40) (Yellow koji mold), this protein is Dipeptidyl-peptidase 5.